Here is a 528-residue protein sequence, read N- to C-terminus: Ulvan lyase, short isoform (528 aa).

Positions 1 to 29 are cleaved as a signal peptide; that stretch reads MKINLSMRELVSRLSTTLKTAIALSVLTA. A lipid anchor (N-palmitoyl cysteine) is attached at Cys-30. The S-diacylglycerol cysteine moiety is linked to residue Cys-30. Residue 151-152 coordinates substrate; sequence SH. His-152 (proton donor/acceptor) is an active-site residue. Ca(2+) is bound by residues Asp-218, Asp-228, and Lys-230. Substrate is bound by residues Tyr-309 and Arg-326. Asn-329, Asp-332, and Phe-334 together coordinate Ca(2+). Substrate is bound at residue His-390.

Belongs to the polysaccharide lyase 24 family.

The protein resides in the secreted. Its subcellular location is the cell membrane. In terms of biological role, ulvan lyase involved in ulvan degradation. Ulvan is the main polysaccharide component of the Ulvales (green seaweed) cell wall. It is composed of disaccharide building blocks comprising 3-sulfated rhamnose (Rha3S) linked to D-glucuronic acid (GlcA), L-iduronic acid (IduA), or D-xylose (Xyl). Ulvan lyase catalyzes preferentially the endolytic cleavage of the glycosidic bond between Rha3S and the uronic acid GlcA, but not IduA, producing oligosaccharides that have unsaturated 4-deoxy-L-threo-hex-4-enopyranosiduronic acid (deltaUA) at the non-reducing end. The most abundant end products in the degradation of the ulvan polysaccharide were deltaUA-Rha3S disaccharides and deltaUA-Rha3S-IduA-Rha3S and deltaUA-Rha3S-Xyl-Rha3S tetrasaccharides. The polypeptide is Ulvan lyase, short isoform (Alteromonas sp. (strain LOR)).